Consider the following 77-residue polypeptide: uncharacterized protein (77 aa).

2 consecutive 4Fe-4S ferredoxin-type domains span residues 3 to 32 (VEIIVDREKCIGCGRCYDVCPKGPLIWTKD) and 36 to 65 (KYYAYDVEYCHNCKFCAGRCPTNAILIKVV). [4Fe-4S] cluster contacts are provided by Cys12, Cys15, Cys18, Cys22, Cys45, Cys48, Cys51, and Cys55.

[4Fe-4S] cluster is required as a cofactor.

Ferredoxins are iron-sulfur proteins that transfer electrons probably in the CO-dehydrogenase complex. This is an uncharacterized protein from Methanocaldococcus jannaschii (strain ATCC 43067 / DSM 2661 / JAL-1 / JCM 10045 / NBRC 100440) (Methanococcus jannaschii).